The following is a 457-amino-acid chain: uncharacterized protein (457 aa).

At Lys75 the chain carries N6-(pyridoxal phosphate)lysine.

Requires pyridoxal 5'-phosphate as cofactor.

This is an uncharacterized protein from Sinorhizobium fredii (strain NBRC 101917 / NGR234).